Reading from the N-terminus, the 64-residue chain is uncharacterized protein (64 aa).

A helical transmembrane segment spans residues 41–61 (VFLALKVLGIMVLFYLLDAII).

It localises to the membrane. This is an uncharacterized protein from Acheta domesticus (House cricket).